A 468-amino-acid chain; its full sequence is Peripherin (468 aa).

Over residues methionine 1–serine 16 the composition is skewed to low complexity. Residues methionine 1 to glycine 22 are disordered. Positions methionine 1–glutamine 96 are head. Tyrosine 17 carries the 3'-nitrotyrosine modification. Phosphoserine is present on residues serine 28, serine 50, and serine 59. An IF rod domain is found at glutamate 94 to isoleucine 404. The interval glutamate 97 to alanine 129 is coil 1A. The linker 1 stretch occupies residues arginine 130 to leucine 140. Residues cysteine 141–leucine 236 are coil 1B. The linker 2 stretch occupies residues glutamine 237–threonine 259. The coil 2 stretch occupies residues alanine 260–serine 402. Tyrosine 376 carries the 3'-nitrotyrosine modification. Positions arginine 403–tyrosine 468 are tail. A disordered region spans residues glycine 445–tyrosine 468. At tyrosine 468 the chain carries Phosphotyrosine.

The protein belongs to the intermediate filament family. In terms of assembly, forms homodimers (in vitro). Homopolymerizes into a filamentous network (in vitro). Forms heterodimers with NEFL, NEFM or NEFH (in vitro). Interacts with DST (via C-terminus). Interacts with RAB7A; the interaction is direct. Interacts with PRKCE (via phorbol-ester/DAG-type 2 domain). Phosphorylated; phosphorylation increases after nerve injury in regenerating neurons. Expressed in hypoglossal motor neurons (at protein level). Expressed in the small and large sensory neurons of the dorsal root ganglion (at protein level). Expressed in cutaneous and muscular sensory neurons.

The protein localises to the cytoplasm. Its subcellular location is the cytoskeleton. The protein resides in the cell projection. It is found in the axon. It localises to the perikaryon. Its function is as follows. Class-III neuronal intermediate filament protein. My form an independent structural network without the involvement of other neurofilaments or may cooperate with the neuronal intermediate filament proteins NEFL, NEFH, NEFM and INA to form a filamentous network. Assembly of the neuronal intermediate filaments may be regulated by RAB7A. Plays a role in the development of unmyelinated sensory neurons. May be involved in axon elongation and axon regeneration after injury. Inhibits neurite extension in type II spiral ganglion neurons in the cochlea. This chain is Peripherin (Prph), found in Rattus norvegicus (Rat).